We begin with the raw amino-acid sequence, 308 residues long: Porphobilinogen deaminase (308 aa).

Residue cysteine 240 is modified to S-(dipyrrolylmethanemethyl)cysteine.

Belongs to the HMBS family. Monomer. It depends on dipyrromethane as a cofactor.

The enzyme catalyses 4 porphobilinogen + H2O = hydroxymethylbilane + 4 NH4(+). It functions in the pathway porphyrin-containing compound metabolism; protoporphyrin-IX biosynthesis; coproporphyrinogen-III from 5-aminolevulinate: step 2/4. Tetrapolymerization of the monopyrrole PBG into the hydroxymethylbilane pre-uroporphyrinogen in several discrete steps. This Maridesulfovibrio salexigens (strain ATCC 14822 / DSM 2638 / NCIMB 8403 / VKM B-1763) (Desulfovibrio salexigens) protein is Porphobilinogen deaminase.